A 447-amino-acid polypeptide reads, in one-letter code: Probable glycine dehydrogenase (decarboxylating) subunit 1 (447 aa).

It belongs to the GcvP family. N-terminal subunit subfamily. The glycine cleavage system is composed of four proteins: P, T, L and H. In this organism, the P 'protein' is a heterodimer of two subunits.

The enzyme catalyses N(6)-[(R)-lipoyl]-L-lysyl-[glycine-cleavage complex H protein] + glycine + H(+) = N(6)-[(R)-S(8)-aminomethyldihydrolipoyl]-L-lysyl-[glycine-cleavage complex H protein] + CO2. Its function is as follows. The glycine cleavage system catalyzes the degradation of glycine. The P protein binds the alpha-amino group of glycine through its pyridoxal phosphate cofactor; CO(2) is released and the remaining methylamine moiety is then transferred to the lipoamide cofactor of the H protein. In Bacillus mycoides (strain KBAB4) (Bacillus weihenstephanensis), this protein is Probable glycine dehydrogenase (decarboxylating) subunit 1.